A 325-amino-acid chain; its full sequence is Alkanal monooxygenase beta chain (325 aa).

Belongs to the bacterial luciferase oxidoreductase family. In terms of assembly, heterodimer of an alpha and a beta chain.

The catalysed reaction is a long-chain fatty aldehyde + FMNH2 + O2 = a long-chain fatty acid + hnu + FMN + H2O + 2 H(+). In terms of biological role, light-emitting reaction in luminous bacteria. The specific role of the beta subunit is unknown, but it is absolutely required for bioluminescence activity. The chain is Alkanal monooxygenase beta chain (luxB) from Photobacterium leiognathi.